Reading from the N-terminus, the 3095-residue chain is HD protein homolog (3095 aa).

Disordered regions lie at residues 105 to 197 (PHQH…NGNA), 536 to 561 (QQQQ…TMSG), 1312 to 1371 (PPQQ…STVI), 1509 to 1547 (KSTS…TTPS), and 2005 to 2037 (KELT…KEEE). A compositionally biased stretch (polar residues) spans 115–139 (STNLTDHLSQNSVTPSVPTTPNYQQ). 2 stretches are compositionally biased toward low complexity: residues 140–197 (SPST…NGNA) and 536–551 (QQQQ…QQQQ). The span at 552–561 (HNLTSSTMSG) shows a compositional bias: polar residues. Low complexity-rich tracts occupy residues 1315–1368 (QQQQ…LNNS), 1510–1547 (STSS…TTPS), and 2008–2018 (TNNNNNNNNNI).

This sequence belongs to the huntingtin family.

It is found in the cytoplasm. The protein localises to the nucleus. Functionally, may play a role in microtubule-mediated transport or vesicle function. The sequence is that of HD protein homolog (htt) from Dictyostelium discoideum (Social amoeba).